We begin with the raw amino-acid sequence, 540 residues long: Chaperonin GroEL 1 (540 aa).

ATP is bound by residues Thr-29–Pro-32, Asp-86–Thr-90, Gly-415, Asn-479–Ala-481, and Asp-495.

It belongs to the chaperonin (HSP60) family. Forms a cylinder of 14 subunits composed of two heptameric rings stacked back-to-back. Interacts with the co-chaperonin GroES.

It localises to the cytoplasm. The enzyme catalyses ATP + H2O + a folded polypeptide = ADP + phosphate + an unfolded polypeptide.. Functionally, together with its co-chaperonin GroES, plays an essential role in assisting protein folding. The GroEL-GroES system forms a nano-cage that allows encapsulation of the non-native substrate proteins and provides a physical environment optimized to promote and accelerate protein folding. This is Chaperonin GroEL 1 from Streptomyces albus G.